Here is a 500-residue protein sequence, read N- to C-terminus: GTPase Der (500 aa).

EngA-type G domains lie at Pro-3–Leu-166 and Ile-211–Thr-384. GTP is bound by residues Gly-9–Ser-16, Asp-56–Ile-60, Asn-118–Asp-121, Gly-217–Ser-224, Asp-264–Val-268, and Asn-329–Asp-332. In terms of domain architecture, KH-like spans Lys-385–Glu-469. Residues Ser-468–Lys-500 form a disordered region. Residues Gln-486 to Lys-500 show a composition bias toward basic residues.

Belongs to the TRAFAC class TrmE-Era-EngA-EngB-Septin-like GTPase superfamily. EngA (Der) GTPase family. Associates with the 50S ribosomal subunit.

Its function is as follows. GTPase that plays an essential role in the late steps of ribosome biogenesis. This is GTPase Der from Aliivibrio fischeri (strain ATCC 700601 / ES114) (Vibrio fischeri).